We begin with the raw amino-acid sequence, 307 residues long: Urease accessory protein UreD (307 aa).

This sequence belongs to the UreD family. In terms of assembly, ureD, UreF and UreG form a complex that acts as a GTP-hydrolysis-dependent molecular chaperone, activating the urease apoprotein by helping to assemble the nickel containing metallocenter of UreC. The UreE protein probably delivers the nickel.

It is found in the cytoplasm. Required for maturation of urease via the functional incorporation of the urease nickel metallocenter. In Prochlorococcus marinus (strain NATL2A), this protein is Urease accessory protein UreD.